The primary structure comprises 267 residues: Urease accessory protein UreD (267 aa).

This sequence belongs to the UreD family. In terms of assembly, ureD, UreF and UreG form a complex that acts as a GTP-hydrolysis-dependent molecular chaperone, activating the urease apoprotein by helping to assemble the nickel containing metallocenter of UreC. The UreE protein probably delivers the nickel.

It localises to the cytoplasm. Functionally, required for maturation of urease via the functional incorporation of the urease nickel metallocenter. In Synechococcus sp. (strain JA-2-3B'a(2-13)) (Cyanobacteria bacterium Yellowstone B-Prime), this protein is Urease accessory protein UreD.